Here is a 516-residue protein sequence, read N- to C-terminus: Protein P54 (516 aa).

The signal sequence occupies residues 1–27; sequence MKKSLLSAVMLSSIALTAVGSPIAAAA. The tract at residues 208–397 is disordered; the sequence is ATAEDKKADL…PAPAPAPNPS (190 aa). The segment covering 210 to 236 has biased composition (basic and acidic residues); the sequence is AEDKKADLNRKKAEAEAEQARIREQAR. 2 stretches are compositionally biased toward low complexity: residues 237–247 and 257–380; these read LAEQARQQAAQ and QAAA…TVTP. Over residues 381 to 395 the composition is skewed to pro residues; sequence APTPTPTPAPAPAPN. Positions 399–516 constitute a NlpC/P60 domain; the sequence is SVNGAAIVAE…WYTPDFAVSM (118 aa). Cys-429 serves as the catalytic Nucleophile. His-480 (proton acceptor) is an active-site residue. His-492 is an active-site residue.

It belongs to the peptidase C40 family.

It is found in the secreted. The protein localises to the cell wall. The protein is Protein P54 of Enterococcus faecium (Streptococcus faecium).